Here is a 454-residue protein sequence, read N- to C-terminus: Tryptophanase (454 aa).

Lys-256 carries the N6-(pyridoxal phosphate)lysine modification.

It belongs to the beta-eliminating lyase family. As to quaternary structure, homotetramer. Pyridoxal 5'-phosphate is required as a cofactor.

The catalysed reaction is L-tryptophan + H2O = indole + pyruvate + NH4(+). Its pathway is amino-acid degradation; L-tryptophan degradation via pyruvate pathway; indole and pyruvate from L-tryptophan: step 1/1. This chain is Tryptophanase (tnaA), found in Rhodobacter capsulatus (Rhodopseudomonas capsulata).